The primary structure comprises 189 residues: CASP-like protein 1F2 (189 aa).

At M1–G27 the chain is on the cytoplasmic side. A helical membrane pass occupies residues F28 to A48. The Extracellular segment spans residues V49–L77. A helical transmembrane segment spans residues V78–F98. Topologically, residues N99–D113 are cytoplasmic. A helical membrane pass occupies residues L114–G134. Residues R135–K156 are Extracellular-facing. A helical membrane pass occupies residues A157–M177. Over A178 to I189 the chain is Cytoplasmic.

It belongs to the Casparian strip membrane proteins (CASP) family. In terms of assembly, homodimer and heterodimers.

It is found in the cell membrane. This is CASP-like protein 1F2 from Vitis vinifera (Grape).